The primary structure comprises 94 residues: MPDIRVEVVYALSERQYLRTVSLVVGSTVEDAIKASGLLELRPDIDLEKNKVGIYSRPVKLGDKLNDGDRVEIYRPLIADPKELRRQRAEQAKK.

This sequence belongs to the UPF0125 (RnfH) family.

This is Protein RnfH from Yersinia pestis bv. Antiqua (strain Antiqua).